We begin with the raw amino-acid sequence, 426 residues long: Enolase (426 aa).

Gln-163 is a (2R)-2-phosphoglycerate binding site. The Proton donor role is filled by Glu-205. Mg(2+) is bound by residues Asp-242, Glu-285, and Asp-312. Positions 337, 366, 367, and 388 each coordinate (2R)-2-phosphoglycerate. Lys-337 (proton acceptor) is an active-site residue.

It belongs to the enolase family. Mg(2+) serves as cofactor.

The protein localises to the cytoplasm. It is found in the secreted. Its subcellular location is the cell surface. The enzyme catalyses (2R)-2-phosphoglycerate = phosphoenolpyruvate + H2O. The protein operates within carbohydrate degradation; glycolysis; pyruvate from D-glyceraldehyde 3-phosphate: step 4/5. Its function is as follows. Catalyzes the reversible conversion of 2-phosphoglycerate (2-PG) into phosphoenolpyruvate (PEP). It is essential for the degradation of carbohydrates via glycolysis. The polypeptide is Enolase (Gluconobacter oxydans (strain 621H) (Gluconobacter suboxydans)).